A 362-amino-acid polypeptide reads, in one-letter code: Dihydroorotate dehydrogenase (quinone) (362 aa).

FMN contacts are provided by residues 62–66 (AGYDK) and Thr86. Lys66 contacts substrate. 111–115 (NRLGF) is a binding site for substrate. The FMN site is built by Asn139 and Asn170. Substrate is bound at residue Asn170. Ser173 functions as the Nucleophile in the catalytic mechanism. Asn175 serves as a coordination point for substrate. 2 residues coordinate FMN: Lys215 and Ser243. Position 244-245 (244-245 (NT)) interacts with substrate. Residues Gly266, Gly295, and 316–317 (YS) contribute to the FMN site.

It belongs to the dihydroorotate dehydrogenase family. Type 2 subfamily. In terms of assembly, monomer. The cofactor is FMN.

The protein resides in the cell membrane. The enzyme catalyses (S)-dihydroorotate + a quinone = orotate + a quinol. It functions in the pathway pyrimidine metabolism; UMP biosynthesis via de novo pathway; orotate from (S)-dihydroorotate (quinone route): step 1/1. In terms of biological role, catalyzes the conversion of dihydroorotate to orotate with quinone as electron acceptor. This is Dihydroorotate dehydrogenase (quinone) from Rhizobium leguminosarum bv. trifolii (strain WSM2304).